A 218-amino-acid chain; its full sequence is Urease accessory protein UreG (218 aa).

GTP is bound at residue 22-29 (GPVGSGKT).

It belongs to the SIMIBI class G3E GTPase family. UreG subfamily. In terms of assembly, homodimer. UreD, UreF and UreG form a complex that acts as a GTP-hydrolysis-dependent molecular chaperone, activating the urease apoprotein by helping to assemble the nickel containing metallocenter of UreC. The UreE protein probably delivers the nickel.

The protein resides in the cytoplasm. Facilitates the functional incorporation of the urease nickel metallocenter. This process requires GTP hydrolysis, probably effectuated by UreG. This Polaromonas naphthalenivorans (strain CJ2) protein is Urease accessory protein UreG.